We begin with the raw amino-acid sequence, 225 residues long: Cytidylate kinase (225 aa).

Gly11–Thr19 contacts ATP.

The protein belongs to the cytidylate kinase family. Type 1 subfamily.

It localises to the cytoplasm. The catalysed reaction is CMP + ATP = CDP + ADP. The enzyme catalyses dCMP + ATP = dCDP + ADP. This Mannheimia succiniciproducens (strain KCTC 0769BP / MBEL55E) protein is Cytidylate kinase.